The chain runs to 126 residues: Fluoride-specific ion channel FluC (126 aa).

4 consecutive transmembrane segments (helical) span residues 4-24, 35-55, 67-87, and 100-120; these read YLYIAAGGAAGSLCRYLVSGV, IGTFSVNMIGCLFFGLVTGLF, LLILTGFMGAFTTFSTYMFES, and ALNIGGQSILGFACIVGGLAL. 2 residues coordinate Na(+): Gly-75 and Thr-78.

It belongs to the fluoride channel Fluc/FEX (TC 1.A.43) family.

It is found in the cell inner membrane. The catalysed reaction is fluoride(in) = fluoride(out). Na(+) is not transported, but it plays an essential structural role and its presence is essential for fluoride channel function. Functionally, fluoride-specific ion channel. Important for reducing fluoride concentration in the cell, thus reducing its toxicity. This is Fluoride-specific ion channel FluC from Maridesulfovibrio salexigens (strain ATCC 14822 / DSM 2638 / NCIMB 8403 / VKM B-1763) (Desulfovibrio salexigens).